An 88-amino-acid polypeptide reads, in one-letter code: LYR motif-containing protein 2 (88 aa).

The N-terminal 19 residues, 1 to 19, are a transit peptide targeting the mitochondrion; sequence MATSRLPPATLTLKQFMRR.

It belongs to the complex I LYR family.

It is found in the mitochondrion. In terms of biological role, involved in efficient integration of the N-module into mitochondrial respiratory chain complex I. In Bos taurus (Bovine), this protein is LYR motif-containing protein 2 (LYRM2).